A 227-amino-acid chain; its full sequence is Isopentenyl-diphosphate Delta-isomerase 1 (227 aa).

K36 lines the substrate pocket. Residues H40 and H51 each contribute to the Mg(2+) site. The region spanning 49 to 199 (LLHRAFSVFL…EIKITPWFKI (151 aa)) is the Nudix hydrolase domain. 2 residues coordinate substrate: R70 and K74. The active site involves C86. S87 contributes to the substrate binding site. Residues E146 and E148 each coordinate Mg(2+). The active site involves E148. K176 is modified (N6-acetyllysine). Positions 225 to 227 (YRI) match the Microbody targeting signal motif.

The protein belongs to the IPP isomerase type 1 family. Monomer. It depends on Mg(2+) as a cofactor.

The protein resides in the peroxisome. The catalysed reaction is isopentenyl diphosphate = dimethylallyl diphosphate. Its pathway is isoprenoid biosynthesis; dimethylallyl diphosphate biosynthesis; dimethylallyl diphosphate from isopentenyl diphosphate: step 1/1. In terms of biological role, catalyzes the 1,3-allylic rearrangement of the homoallylic substrate isopentenyl (IPP) to its highly electrophilic allylic isomer, dimethylallyl diphosphate (DMAPP). This is Isopentenyl-diphosphate Delta-isomerase 1 (IDI1) from Pongo abelii (Sumatran orangutan).